The primary structure comprises 78 residues: Calcium/calmodulin-dependent protein kinase II inhibitor 1 (78 aa).

The tract at residues 41–68 (NKRPPKLGQIGRSKRVVIEDDRIDDVLK) is CAMK2 inhibitory domain.

The protein belongs to the CAMK2N family. Interacts with CAMK2B; the presence of Ca(2+)/calmodulin increases the interaction but is not essential. Interacts with CAMK2A; this interaction requires CAMK2A activation by Ca(2+).

Its subcellular location is the synapse. The protein resides in the cell projection. It is found in the dendrite. The protein localises to the postsynaptic density. Functionally, potent and specific inhibitor of CaM-kinase II (CAMK2). Plays a role in the maintenance of long-term retrieval-induced memory in response to contextual fear. Modulates blood pressure and vascular reactivity via regulation of CAMK2 activity in addition to regulation of left ventricular mass. Mediates the NLRP3 inflammasome in cardiomyocytes via acting as an inhibitor of the MAPK14/p38 and MAPK8/JNK pathways, thereby regulating ventricular remodeling and cardiac rhythm post-myocardial infarction. Negatively effects insulin sensitivity and promotes lipid formation in adipose tissues independent of CAMK2 signaling. The polypeptide is Calcium/calmodulin-dependent protein kinase II inhibitor 1 (CAMK2N1) (Homo sapiens (Human)).